The primary structure comprises 390 residues: Transposase for insertion sequence element IS21 (390 aa).

The region spanning 5-66 is the HTH IS21-type domain; it reads EDFYMIKQMR…PFMDYIDMRL (62 aa). Residues 20–39 constitute a DNA-binding region (H-T-H motif); the sequence is IVDIATQIGCSERTVRRYLK. In terms of domain architecture, Integrase catalytic spans 111–285; that stretch reads FETQPRYQLQ…TPEQRFALEQ (175 aa).

This sequence belongs to the transposase IS21/IS408/IS1162 family.

Functionally, involved in the transposition of the insertion sequence. The chain is Transposase for insertion sequence element IS21 (istA) from Pseudomonas aeruginosa.